The primary structure comprises 808 residues: MEAESPCAASDLAVARRELLSGNHRELDPVGLRQTWLDLHESWLIDKADEIGIADASGFAIVGVGGLGRRELLPYSDLDVLLLHDGKPADILRPVADRLWYPLWDANIRLDHSVRTVSEALTIANSDLMAALGMLEARHIAGDQQLSFALIDGVRRQWRNGIRSRMGELVEMTYARWRRCGRIAQRAEPDLKLGRGGLRDVQLLDALALAQLIDRHGIGHTDLPAGSLDGAYRTLLDVRTELHRVSGRGRDHLLAQFADEISAALGFGDRFDLARTLSSAGRTIGYHAEAGLRTAANALPRRGISALVRRPKRRPLDEGVVEYAGEIVLARDAEPEHDPGLVLRVAAASADTGLPIGAATLSRLAASVPDLPTPWPQEALDDLLVVLSAGPTTVATIEALDRTGLWGRLLPEWEPIRDLPPRDVAHKWTVDRHVVETAVHAAPLATRVARPDLLALGALLHDIGKGRGTDHSVLGAELVIPVCTRLGLSPPDVRTLSKLVRHHLLLPITATRRDLNDPKTIEAVSEALGGDPQLLEVLHALSEADSKATGPGVWSDWKASLVDDLVRRCRMVMAGESLPQAEPTAPHYLSLAADHGVHVEISPRDGERIDAVIVAPDERGLVSKAAAVLALNSLRVHSASVNVHQGVAITEFVVSPLFGSPPAAELVRQQFVGALNGDVDVLGMLQKRDSDAASLVSARAGDVQAGVPVTRTAAPPRILWLDTAAPAKLILEVRAMDRAGLLALLAGALEGAGAGIVWAKVNTFGSTAADVFCVTVPAELDARAAVEQHLLEVLGASVDVVVDEPVGD.

The uridylyltransferase stretch occupies residues 1–315; that stretch reads MEAESPCAAS…ALVRRPKRRP (315 aa). The tract at residues 316–609 is uridylyl-removing; the sequence is LDEGVVEYAG…EISPRDGERI (294 aa). The region spanning 430–544 is the HD domain; it reads VDRHVVETAV…LEVLHALSEA (115 aa). ACT domains lie at 610–686 and 730–805; these read DAVI…GMLQ and ILEV…VDEP.

It belongs to the GlnD family. The cofactor is Mg(2+).

The enzyme catalyses [protein-PII]-L-tyrosine + UTP = [protein-PII]-uridylyl-L-tyrosine + diphosphate. It carries out the reaction [protein-PII]-uridylyl-L-tyrosine + H2O = [protein-PII]-L-tyrosine + UMP + H(+). Functionally, modifies, by uridylylation and deuridylylation, the PII regulatory protein (GlnB), in response to the nitrogen status of the cell that GlnD senses through the glutamine level. Under low glutamine levels, catalyzes the conversion of the PII protein and UTP to PII-UMP and PPi, while under higher glutamine levels, GlnD hydrolyzes PII-UMP to PII and UMP (deuridylylation). Thus, controls uridylylation state and activity of the PII protein, and plays an important role in the regulation of nitrogen assimilation and metabolism. This Mycobacterium tuberculosis (strain CDC 1551 / Oshkosh) protein is Bifunctional uridylyltransferase/uridylyl-removing enzyme.